The chain runs to 984 residues: Protein translocase subunit SecA (984 aa).

Residues glutamine 96, 114–118, and aspartate 595 each bind ATP; that span reads GEGKT. 2 stretches are compositionally biased toward basic and acidic residues: residues 930-942 and 952-971; these read EHEE…RLLE and KSDK…EERL. The tract at residues 930-984 is disordered; that stretch reads EHEEEKKHQRLLEEAELQGVQGKSDKKPRPKTLKERLKEERLRKRKLKAKKKEQE. Residues 972 to 984 show a composition bias toward basic residues; sequence RKRKLKAKKKEQE.

The protein belongs to the SecA family. In terms of assembly, monomer and homodimer. Part of the essential Sec protein translocation apparatus which comprises SecA, SecYEG and auxiliary proteins SecDF. Other proteins may also be involved.

The protein resides in the cell inner membrane. Its subcellular location is the cytoplasm. The catalysed reaction is ATP + H2O + cellular proteinSide 1 = ADP + phosphate + cellular proteinSide 2.. In terms of biological role, part of the Sec protein translocase complex. Interacts with the SecYEG preprotein conducting channel. Has a central role in coupling the hydrolysis of ATP to the transfer of proteins into and across the cell membrane, serving as an ATP-driven molecular motor driving the stepwise translocation of polypeptide chains across the membrane. The polypeptide is Protein translocase subunit SecA (Aquifex aeolicus (strain VF5)).